We begin with the raw amino-acid sequence, 581 residues long: Intermediate filament protein ifa-2 (581 aa).

2 disordered regions span residues Met-1–Asn-35 and Ser-47–Arg-68. Positions Met-1–Glu-74 are head. The segment covering Tyr-7–Tyr-28 has biased composition (polar residues). Residues Glu-71–Asn-424 form the IF rod domain. The interval Ile-75–Leu-106 is coil 1A. Residues Gln-107–Met-120 form a linker 1 region. The coil 1B stretch occupies residues Tyr-121–Leu-258. Residues Gln-259 to Asn-276 are linker 12. The tract at residues Glu-277 to Asn-424 is coil 2. Residues Gly-425–Thr-578 are tail. Positions Arg-449 to Val-469 are disordered. The region spanning Ser-457–Gln-574 is the LTD domain.

It belongs to the intermediate filament family. As to quaternary structure, forms some heteromeric filaments with ifb-1. As to expression, mainly expressed in regions of the hypodermis adjacent to muscle. Expressed in longitudinal stripes where the mechanosensory neurons interface with the hypodermis. Also expressed to the uterine seam and within the uterine-vulval cells.

The protein localises to the cell junction. It is found in the hemidesmosome. In terms of biological role, cytoplasmic intermediate filaments provide mechanical strength to cells. Essential protein, involved in attachment structures in epidermal cells that connect muscles to the external cuticle. Probably acts by forming hypodermal hemidesmosome complexes that help mediate muscle-cuticle force transduction. Although expressed during embryogenesis, it is not required for embryonic development of muscle-cuticle linkages nor for the localization of other proteins to the hemidesmosomes in embryos. This chain is Intermediate filament protein ifa-2, found in Caenorhabditis elegans.